Consider the following 105-residue polypeptide: Met repressor (105 aa).

Belongs to the MetJ family. In terms of assembly, homodimer.

The protein localises to the cytoplasm. Functionally, this regulatory protein, when combined with SAM (S-adenosylmethionine) represses the expression of the methionine regulon and of enzymes involved in SAM synthesis. This Citrobacter koseri (strain ATCC BAA-895 / CDC 4225-83 / SGSC4696) protein is Met repressor.